A 135-amino-acid chain; its full sequence is Small ribosomal subunit protein uS12 (135 aa).

A 3-methylthioaspartic acid modification is found at D89. A disordered region spans residues 103–135 (DTAGVKNRMQSRSKYGTKRPKPGQAAAPAGKKR). Residues 111-123 (MQSRSKYGTKRPK) are compositionally biased toward basic residues. Low complexity predominate over residues 124 to 135 (PGQAAAPAGKKR).

This sequence belongs to the universal ribosomal protein uS12 family. As to quaternary structure, part of the 30S ribosomal subunit. Contacts proteins S8 and S17. May interact with IF1 in the 30S initiation complex.

Functionally, with S4 and S5 plays an important role in translational accuracy. Interacts with and stabilizes bases of the 16S rRNA that are involved in tRNA selection in the A site and with the mRNA backbone. Located at the interface of the 30S and 50S subunits, it traverses the body of the 30S subunit contacting proteins on the other side and probably holding the rRNA structure together. The combined cluster of proteins S8, S12 and S17 appears to hold together the shoulder and platform of the 30S subunit. This is Small ribosomal subunit protein uS12 from Gloeobacter violaceus (strain ATCC 29082 / PCC 7421).